Here is a 379-residue protein sequence, read N- to C-terminus: Lipoyl synthase, mitochondrial (379 aa).

Residues C106, C111, C117, C137, C141, C144, and S352 each coordinate [4Fe-4S] cluster. In terms of domain architecture, Radical SAM core spans 122 to 341 (EHGTQTATIM…EERGNALGFL (220 aa)).

Belongs to the radical SAM superfamily. Lipoyl synthase family. The cofactor is [4Fe-4S] cluster.

The protein resides in the mitochondrion. The catalysed reaction is [[Fe-S] cluster scaffold protein carrying a second [4Fe-4S](2+) cluster] + N(6)-octanoyl-L-lysyl-[protein] + 2 oxidized [2Fe-2S]-[ferredoxin] + 2 S-adenosyl-L-methionine + 4 H(+) = [[Fe-S] cluster scaffold protein] + N(6)-[(R)-dihydrolipoyl]-L-lysyl-[protein] + 4 Fe(3+) + 2 hydrogen sulfide + 2 5'-deoxyadenosine + 2 L-methionine + 2 reduced [2Fe-2S]-[ferredoxin]. Its pathway is protein modification; protein lipoylation via endogenous pathway; protein N(6)-(lipoyl)lysine from octanoyl-[acyl-carrier-protein]: step 2/2. In terms of biological role, catalyzes the radical-mediated insertion of two sulfur atoms into the C-6 and C-8 positions of the octanoyl moiety bound to the lipoyl domains of lipoate-dependent enzymes, thereby converting the octanoylated domains into lipoylated derivatives. The polypeptide is Lipoyl synthase, mitochondrial (Drosophila erecta (Fruit fly)).